The primary structure comprises 3020 residues: Protein furry homolog (3020 aa).

Y213 carries the phosphotyrosine modification. 3 disordered regions span residues 1378–1404, 1529–1554, and 1746–1773; these read GSSP…LKGN, ASGT…ESKI, and SSPV…GNLP. Phosphoserine is present on residues S1382 and S1383. The span at 1752–1772 shows a compositional bias: low complexity; that stretch reads SGLNSSSTSSSISLGGSSGNL. Phosphoserine occurs at positions 1936 and 1940. Positions 1937–1956 are enriched in low complexity; sequence RSSSPDLSSSSKLTASRKST. 2 disordered regions span residues 1937 to 2042 and 2355 to 2384; these read RSSS…PSHV and LQNS…SNSN. The segment covering 1966–1976 has biased composition (gly residues); it reads PGSGGGGGGSG. Residues 2016-2042 are compositionally biased toward polar residues; that stretch reads ACTQQGLSSKTRSNSSLKESLTDPSHV. The span at 2369–2384 shows a compositional bias: low complexity; sequence AVTRSASSTSSGSNSN. A phosphoserine mark is found at S2427 and S2428. The segment at 2439–2458 is disordered; that stretch reads TSLVSSEDGPREQENMDDTN. A Phosphoserine modification is found at S2495. The tract at residues 2508-2535 is disordered; sequence EERQLSRSTPSLNKMSHEDSDESSEEDL. The residue at position 2516 (T2516) is a Phosphothreonine; by CDK1. The span at 2526-2535 shows a compositional bias: acidic residues; it reads DSDESSEEDL. A Phosphoserine modification is found at S2815.

This sequence belongs to the furry protein family. As to quaternary structure, when phosphorylated by CDK1, interacts with PLK1; this interaction occurs in mitotic cells, but not in interphase cells, and leads to further FRY phosphorylation by PLK1. Phosphorylated by AURKA, CDK1 and PLK1.

Its subcellular location is the cytoplasm. The protein localises to the cytoskeleton. The protein resides in the microtubule organizing center. It is found in the centrosome. It localises to the spindle pole. Plays a crucial role in the structural integrity of mitotic centrosomes and in the maintenance of spindle bipolarity by promoting PLK1 activity at the spindle poles in early mitosis. May function as a scaffold promoting the interaction between AURKA and PLK1, thereby enhancing AURKA-mediated PLK1 phosphorylation. This is Protein furry homolog (Fry) from Mus musculus (Mouse).